Here is a 612-residue protein sequence, read N- to C-terminus: tRNA(Met) cytidine acetyltransferase TmcA (612 aa).

Residues Q136, 161–170 (GRGKSTLLGQ), and R284 contribute to the ATP site. Residues 319-499 (KHASELEEAL…PAAIYALPLT (181 aa)) enclose the N-acetyltransferase domain. Residue 424 to 426 (IAV) participates in acetyl-CoA binding.

Belongs to the RNA cytidine acetyltransferase family. TmcA subfamily.

The protein localises to the cytoplasm. It catalyses the reaction cytidine(34) in elongator tRNA(Met) + acetyl-CoA + ATP + H2O = N(4)-acetylcytidine(34) in elongator tRNA(Met) + ADP + phosphate + CoA + H(+). Functionally, catalyzes the formation of N(4)-acetylcytidine (ac(4)C) at the wobble position of tRNA(Met), by using acetyl-CoA as an acetyl donor and ATP (or GTP). The polypeptide is tRNA(Met) cytidine acetyltransferase TmcA (Idiomarina loihiensis (strain ATCC BAA-735 / DSM 15497 / L2-TR)).